The following is an 86-amino-acid chain: Colicin-E2 immunity protein (86 aa).

The protein belongs to the colicins ColE2/ColE8/ColE9 and pyocins S1/S2 family.

In terms of biological role, this protein is able to protect a cell, which harbors the plasmid ColE2 encoding colicin E2, against colicin E2. In Escherichia coli, this protein is Colicin-E2 immunity protein (imm).